The chain runs to 834 residues: Protein argonaute (834 aa).

Residues 210–326 (SLLQILMEYT…LPIEFCFVVK (117 aa)) enclose the PAZ domain. One can recognise a Piwi domain in the interval 500–799 (YLFFILDKNS…VSNLARYQDV (300 aa)).

The protein belongs to the argonaute family. Ago subfamily. In terms of assembly, ago1, chp1 and tas3 interact to form the core of the RNA-induced transcriptional silencing (RITS) complex. The RITS complex interacts with the RDRC complex via interaction between ago1 and hrr1. Clr4 has a role in mediating this interaction. Component of the argonaute siRNA chaperone (ARC) complex composed of ago1, arb1 and arb2. Interacts with arb1.

It localises to the cytoplasm. It is found in the nucleus. The protein resides in the chromosome. Its subcellular location is the centromere. The protein localises to the telomere. Its function is as follows. Required for G1 arrest and mating in response to nitrogen starvation. Ago1 regulation of cytokinesis and cell cycle checkpoints occurs downstream of dcr1. Required, indirectly, for regulated hyperphosphorylation of cdc2. Has a role in the RNA interference (RNAi) pathway which is important for heterochromatin formation, accurate chromosome segregation, centromere cohesion and telomere function during mitosis and meiosis. Required for silencing at the centromeres and for initiation of transcriptionally silent heterochromatin at the mating type locus. Promotes histone H3K9 methylation necessary for centromere function. Required for recruitment of swi6 and cohesin to an ectopic dg repeat. A member of the RNA-induced transcriptional silencing (RITS) complex which is involved in the biosynthesis of dsRNA from primer siRNAs provided by the RNA-directed RNA polymerase (RDRC) complex. Has ribonuclease H-like cleavage (slicing) activity towards target messages complementary to siRNA and can direct site-specific cleavage of RNA substrates via siRNA. Slicing activity is required for both post-transcriptional and transcriptional gene silencing as well as for histone H3 'Lys-10' methylation spreading, conversion of double-stranded siRNA to single-stranded siRNA and siRNA-dependent association of ago1 with chromatin. A member of the argonaute siRNA chaperone (ARC) complex which is required for histone H3K9 methylation, heterochromatin assembly and siRNA generation. The ARC complex contains mostly double-stranded siRNA. The polypeptide is Protein argonaute (ago1) (Schizosaccharomyces pombe (strain 972 / ATCC 24843) (Fission yeast)).